Reading from the N-terminus, the 713-residue chain is Cadherin-13 (713 aa).

Residues 1–22 (MQPRTPLVLCVLLSQVLLLTSA) form the signal peptide. A propeptide spanning residues 23–138 (EDLDCIPGFQ…RTSPVPRQKR (116 aa)) is cleaved from the precursor. N-linked (GlcNAc...) asparagine glycosylation is found at asparagine 52 and asparagine 86. Cadherin domains follow at residues 139 to 245 (SIVV…RPIF), 246 to 363 (REGP…SPKF), 364 to 477 (TKKE…GPVF), 478 to 585 (YPDP…APFI), and 584 to 690 (FIYP…VDSN). N-linked (GlcNAc...) asparagine glycans are attached at residues asparagine 382, asparagine 489, asparagine 500, asparagine 530, asparagine 598, asparagine 638, and asparagine 671. Residue asparagine 690 is the site of GPI-anchor amidated asparagine attachment. A propeptide spans 691–713 (AVGALRFSLPSLLLLSLFSLACL) (removed in mature form).

In terms of assembly, by contrast to classical cadherins, homodimerization in trans is not mediated by cadherin EC1 domain strand-swapping, but instead through a homophilic adhesive interface which joins two elongated EC1-EC2 domains through a region near their Ca2+-binding sites to form a tetrahedral, X-like shape.

It localises to the cell membrane. The protein localises to the cytoplasm. Its function is as follows. Cadherins are calcium-dependent cell adhesion proteins. They preferentially interact with themselves in a homophilic manner in connecting cells; cadherins may thus contribute to the sorting of heterogeneous cell types. May act as a negative regulator of neural cell growth. The polypeptide is Cadherin-13 (CDH13) (Pongo abelii (Sumatran orangutan)).